The chain runs to 242 residues: Protein HTATIP2 (242 aa).

Ala-2 is subject to N-acetylalanine. The required for interaction with elongation factor EEF1A1 stretch occupies residues Ala-2–Gly-25. Residues Ser-27, Gly-28, Glu-29, Thr-30, Arg-52, Arg-53, Leu-92, Gly-93, Tyr-143, Lys-147, Leu-170, and Arg-178 each contribute to the NADPH site. Catalysis depends on Tyr-143, which acts as the Proton acceptor. Lys-147 is a catalytic residue.

As to quaternary structure, monomer. Forms homodimers during oxidative stress. Interacts (via N-terminus) with elongation factor EEF1A1 (via middle-region); the interaction is direct and competes with EEF1A1 binding to guanyl-nucleotide exchange factor EEF1B2, thereby inhibiting GDP for GTP exchange and reactivation of EEF1A1. Interacts with nuclear transport receptors XPO4, IPO5/RANBP5, IPO7, IPO9 and KPNB1 as well as GCN1L1/GCN1 and LRPPRC probably through their HEAT repeats. Binds NCOA5/CIA. In terms of assembly, interacts (via N-terminus) with proteasome subunit PSMD4/s5a. (Microbial infection) Interacts with HIV-1 Tat (via activation domain). As to expression, high levels in liver, lung, skeletal muscle, pancreas and placenta. Moderate levels in heart and kidney. Low levels in brain. Not expressed or low levels in variant small cell lung carcinomas, 33% of hepatocellular carcinomas and neuroblastomas. Levels are reduced in the heart of patients with hypertrophic cardiomyopathy and failing hearts.

The protein localises to the cytoplasm. In terms of biological role, represses translation by preventing reactivation of elongation factor eEF1A. May also inhibit nuclear import by competing with nuclear import substrates for binding to a subset of nuclear transport receptors. Has additionally been proposed to act as a redox sensor involved in cellular oxidative stress surveillance. The protein is Protein HTATIP2 of Homo sapiens (Human).